Consider the following 379-residue polypeptide: Sialidase-2 (379 aa).

Residues 20-23 (YRIP) carry the FRIP motif motif. Substrate is bound by residues Arg21 and Arg41. The active-site Proton acceptor is Asp46. One copy of the BNR 1 repeat lies at 127-138 (VSSTDHGRTWSP). 2 residues coordinate substrate: Tyr179 and Tyr181. Residues 197 to 208 (FISLDHGHTWKL) form a BNR 2 repeat. Substrate is bound by residues Glu218, Arg237, and Arg303. Arg303 is a catalytic residue. The active-site Nucleophile is the Tyr333. Glu354 is a catalytic residue.

It belongs to the glycosyl hydrolase 33 family. In terms of tissue distribution, highly expressed in heart.

Its subcellular location is the cytoplasm. The protein resides in the cytosol. It catalyses the reaction Hydrolysis of alpha-(2-&gt;3)-, alpha-(2-&gt;6)-, alpha-(2-&gt;8)- glycosidic linkages of terminal sialic acid residues in oligosaccharides, glycoproteins, glycolipids, colominic acid and synthetic substrates.. The catalysed reaction is a ganglioside GD1a + H2O = a ganglioside GM1 + N-acetylneuraminate. It carries out the reaction a ganglioside GM1 + H2O = a ganglioside GA1 + N-acetylneuraminate. The enzyme catalyses a ganglioside GT1b + H2O = a ganglioside GD1b + N-acetylneuraminate. It catalyses the reaction a ganglioside GD1b + H2O = a ganglioside GM1 + N-acetylneuraminate. The catalysed reaction is a ganglioside GD3 + H2O = a ganglioside GM3 + N-acetylneuraminate. It carries out the reaction a ganglioside GM3 + H2O = a beta-D-galactosyl-(1-&gt;4)-beta-D-glucosyl-(1&lt;-&gt;1)-ceramide + N-acetylneuraminate. The enzyme catalyses a ganglioside GM2 + H2O = a ganglioside GA2 + N-acetylneuraminate. It catalyses the reaction a neolactoside IV(3)-alpha-NeuAc-nLc4Cer(d18:1(4E)) + H2O = a neolactoside nLc4Cer(d18:1(4E)) + N-acetylneuraminate. The catalysed reaction is N-acetyl-alpha-neuraminosyl-(2-&gt;3)-beta-D-galactosyl-(1-&gt;4)-D-glucose + H2O = lactose + N-acetylneuraminate. In terms of biological role, exo-alpha-sialidase that catalyzes the hydrolytic cleavage of the terminal sialic acid (N-acetylneuraminic acid, Neu5Ac) of a glycan moiety in the catabolism of glycolipids, glycoproteins and oligosacharides. Recognizes sialyl linkage positions of the glycan moiety as well as the supramolecular organization of the sialoglycoconjugate. Displays preference for alpha-(2-&gt;3)-sialylated GD1a and GT1B gangliosides over alpha-(2-&gt;8)-sialylated GD1b, in both monomeric forms and micelles. Hydrolyzes exclusively monomeric GM1 ganglioside, but has no activity toward the miscellar form. Has lower sialidase activity for glycoproteins such as fetuin and TF/transferrin that carry a mixture of alpha-(2-&gt;3) and alpha-(2-&gt;6)-sialyl linkages. Cleaves milk oligosaccharide alpha-(2-&gt;3)-sialyllactose, but is inactive toward isomer alpha-(2-&gt;6)-sialyllactose isomer. Has no activity toward colominic acid, a homomer of alpha-(2-&gt;8)-linked Neu5Ac residues. This is Sialidase-2 (Neu2) from Mus musculus (Mouse).